A 91-amino-acid chain; its full sequence is Large ribosomal subunit protein uL23 (91 aa).

It belongs to the universal ribosomal protein uL23 family. Part of the 50S ribosomal subunit. Contacts protein L29, and trigger factor when it is bound to the ribosome.

One of the early assembly proteins it binds 23S rRNA. One of the proteins that surrounds the polypeptide exit tunnel on the outside of the ribosome. Forms the main docking site for trigger factor binding to the ribosome. This Macrococcus caseolyticus (strain JCSC5402) (Macrococcoides caseolyticum) protein is Large ribosomal subunit protein uL23.